The primary structure comprises 398 residues: Bifunctional enzyme IspD/IspF (398 aa).

The interval 1–234 (MTNSPRTAAI…SRLMAALGDI (234 aa)) is 2-C-methyl-D-erythritol 4-phosphate cytidylyltransferase. The 2-C-methyl-D-erythritol 2,4-cyclodiphosphate synthase stretch occupies residues 235–398 (RTGTGYDVHA…LPWGADGLAG (164 aa)). Residues Asp-241 and His-243 each contribute to the a divalent metal cation site. Residues 241-243 (DVH) and 267-268 (HS) each bind 4-CDP-2-C-methyl-D-erythritol 2-phosphate. Residue His-275 coordinates a divalent metal cation. 4-CDP-2-C-methyl-D-erythritol 2-phosphate is bound by residues 289 to 291 (DIG), 365 to 368 (TTSE), Phe-372, and Arg-375.

This sequence in the N-terminal section; belongs to the IspD/TarI cytidylyltransferase family. IspD subfamily. It in the C-terminal section; belongs to the IspF family. The cofactor is a divalent metal cation.

The enzyme catalyses 2-C-methyl-D-erythritol 4-phosphate + CTP + H(+) = 4-CDP-2-C-methyl-D-erythritol + diphosphate. The catalysed reaction is 4-CDP-2-C-methyl-D-erythritol 2-phosphate = 2-C-methyl-D-erythritol 2,4-cyclic diphosphate + CMP. Its pathway is isoprenoid biosynthesis; isopentenyl diphosphate biosynthesis via DXP pathway; isopentenyl diphosphate from 1-deoxy-D-xylulose 5-phosphate: step 2/6. The protein operates within isoprenoid biosynthesis; isopentenyl diphosphate biosynthesis via DXP pathway; isopentenyl diphosphate from 1-deoxy-D-xylulose 5-phosphate: step 4/6. Bifunctional enzyme that catalyzes the formation of 4-diphosphocytidyl-2-C-methyl-D-erythritol from CTP and 2-C-methyl-D-erythritol 4-phosphate (MEP) (IspD), and catalyzes the conversion of 4-diphosphocytidyl-2-C-methyl-D-erythritol 2-phosphate (CDP-ME2P) to 2-C-methyl-D-erythritol 2,4-cyclodiphosphate (ME-CPP) with a corresponding release of cytidine 5-monophosphate (CMP) (IspF). The protein is Bifunctional enzyme IspD/IspF of Rhodopseudomonas palustris (strain ATCC BAA-98 / CGA009).